We begin with the raw amino-acid sequence, 323 residues long: UDP-glucuronate 4-epimerase (323 aa).

Residue 11 to 13 coordinates NAD(+); that stretch reads GFI. Tyrosine 152 functions as the Proton acceptor in the catalytic mechanism. NAD(+) is bound at residue lysine 156.

This sequence belongs to the NAD(P)-dependent epimerase/dehydratase family. NAD(+) serves as cofactor.

The enzyme catalyses UDP-alpha-D-glucuronate = UDP-alpha-D-galacturonate. Functionally, catalyzes the interconversion of UDP-D-glucuronic acid (UDP-GlcA) and UDP-D-galacturonic acid (UDP-GalA). The polypeptide is UDP-glucuronate 4-epimerase (Thermodesulfobacterium geofontis (strain OPF15)).